We begin with the raw amino-acid sequence, 204 residues long: Somatotropin (204 aa).

The signal sequence occupies residues 1 to 17; sequence MDRAVLLLSVLSLGVSS. The residue at position 18 (Gln18) is a Pyrrolidone carboxylic acid. His35 contributes to the Zn(2+) binding site. A disulfide bridge connects residues Cys69 and Cys177. A Zn(2+)-binding site is contributed by Glu186. A disulfide bridge links Cys194 with Cys202.

The protein belongs to the somatotropin/prolactin family.

The protein localises to the secreted. Its function is as follows. Growth hormone plays an important role in growth control and is involved in the regulation of several anabolic processes. Implicated as an osmoregulatory substance important for seawater adaptation. The chain is Somatotropin (gh) from Morone saxatilis (Striped bass).